The chain runs to 1308 residues: Contactin-associated protein-like 4 (1308 aa).

The first 25 residues, 1-25, serve as a signal peptide directing secretion; it reads MGSVTGAVLKTLLLLSTQNWNRVEA. The Extracellular segment spans residues 26–1241; sequence GNSYDCDDPL…LANAIKSDSA (1216 aa). The F5/8 type C domain occupies 31-177; the sequence is CDDPLVSALP…IGMRIEVFGC (147 aa). A disulfide bond links cysteine 31 and cysteine 177. Laminin G-like domains are found at residues 212-364 and 398-547; these read FKTM…SFSC and FRTW…IDSC. Asparagine 260, asparagine 285, asparagine 359, and asparagine 538 each carry an N-linked (GlcNAc...) asparagine glycan. Cystine bridges form between cysteine 332-cysteine 364, cysteine 515-cysteine 547, cysteine 553-cysteine 564, and cysteine 558-cysteine 573. The region spanning 549 to 586 is the EGF-like 1 domain; sequence ISDRCLPNYCEHGGECSQSWSTFHCNCTNTGYRGATCH. A glycan (N-linked (GlcNAc...) asparagine) is linked at asparagine 574. Cysteine 575 and cysteine 585 are oxidised to a cystine. Residues 587 to 792 enclose the Fibrinogen C-terminal domain; that stretch reads NSIYEQSCEA…LLCQGDRSFW (206 aa). Asparagine 602, asparagine 625, asparagine 637, asparagine 706, and asparagine 748 each carry an N-linked (GlcNAc...) asparagine glycan. The region spanning 793 to 957 is the Laminin G-like 3 domain; the sequence is NSASFDTEAS…AQVTPEVQPG (165 aa). Disulfide bonds link cysteine 931–cysteine 958, cysteine 962–cysteine 975, cysteine 969–cysteine 984, and cysteine 986–cysteine 996. Residues 958–997 form the EGF-like 2 domain; it reads CRGHCSSYGKLCRNGGKCRERPIGFFCDCTFSAYTGPFCS. N-linked (GlcNAc...) asparagine glycosylation is found at asparagine 1023 and asparagine 1073. The Laminin G-like 4 domain maps to 1046–1202; the sequence is FRTTRTPSLL…VTGHVTESSC (157 aa). Cysteine 1167 and cysteine 1202 are disulfide-bonded. Residues 1242–1262 form a helical membrane-spanning segment; it reads VIGGLIAVVIFILLCITAIAV. The Cytoplasmic segment spans residues 1263-1308; that stretch reads RIYQQKRLYKRSEAKRSENVDSAEAVLKSELNIQNAVNENQKEYFF.

Belongs to the neurexin family. As to quaternary structure, interacts with TIAM1.

The protein resides in the presynaptic cell membrane. In terms of biological role, presynaptic protein involved in both dopaminergic synaptic transmission and GABAergic system, thereby participating in the structural maturation of inhibitory interneuron synapses. Involved in the dopaminergic synaptic transmission by attenuating dopamine release through a presynaptic mechanism. Also participates in the GABAergic system. This Homo sapiens (Human) protein is Contactin-associated protein-like 4 (CNTNAP4).